The chain runs to 131 residues: Tegument protein ORF52 (131 aa).

The disordered stretch occupies residues 103–131 (SDGGTAKPPPGANNRRRRGASTTRAGVDD). Over residues 122–131 (ASTTRAGVDD) the composition is skewed to low complexity. S123 carries the phosphoserine; by host modification.

This sequence belongs to the herpesviridae BLRF2 family. Homooligomer; homooligomerizes and binds double-stranded DNA (dsDNA) cooperatively. Interacts with host CGAS. Interacts with PQBP1.

The protein resides in the host cytoplasm. The protein localises to the virion tegument. Functionally, plays a role in the inhibition of host innate immune system by targeting the CGAS enzymatic activity which is the principal cytosolic DNA sensor that detects invading viral DNA. Acts by inhibiting CGAS-DNA phase separation: directly binds double-stranded DNA (dsDNA) in a length dependent but sequence independent manner and is able to form DNA-induced phase separation in infected cells. DNA phase separation of ORF52 mediates disruption of liquid-like droplets in which CGAS is activated, thereby preventing CGAS activity. Targets also the HDP-RNP complex composed of DNA-PK subunits and paraspeckle proteins. This complex is a key nuclear regulator of DNA-mediated activation of innate immune response through the cGAS-STING pathway. The polypeptide is Tegument protein ORF52 (Homo sapiens (Human)).